We begin with the raw amino-acid sequence, 366 residues long: tRNA/tmRNA (uracil-C(5))-methyltransferase (366 aa).

Gln-190, Tyr-218, Asn-223, Glu-239, and Asp-299 together coordinate S-adenosyl-L-methionine. Cys-324 functions as the Nucleophile in the catalytic mechanism. Glu-358 serves as the catalytic Proton acceptor.

Belongs to the class I-like SAM-binding methyltransferase superfamily. RNA M5U methyltransferase family. TrmA subfamily.

The catalysed reaction is uridine(54) in tRNA + S-adenosyl-L-methionine = 5-methyluridine(54) in tRNA + S-adenosyl-L-homocysteine + H(+). It carries out the reaction uridine(341) in tmRNA + S-adenosyl-L-methionine = 5-methyluridine(341) in tmRNA + S-adenosyl-L-homocysteine + H(+). In terms of biological role, dual-specificity methyltransferase that catalyzes the formation of 5-methyluridine at position 54 (m5U54) in all tRNAs, and that of position 341 (m5U341) in tmRNA (transfer-mRNA). The chain is tRNA/tmRNA (uracil-C(5))-methyltransferase from Salmonella heidelberg (strain SL476).